We begin with the raw amino-acid sequence, 243 residues long: Pyridoxine 5'-phosphate synthase (243 aa).

Asparagine 7 serves as a coordination point for 3-amino-2-oxopropyl phosphate. 1-deoxy-D-xylulose 5-phosphate is bound at residue 9 to 10; that stretch reads DH. Arginine 18 is a binding site for 3-amino-2-oxopropyl phosphate. Histidine 43 serves as the catalytic Proton acceptor. 1-deoxy-D-xylulose 5-phosphate contacts are provided by arginine 45 and histidine 50. Residue glutamate 70 is the Proton acceptor of the active site. Threonine 100 provides a ligand contact to 1-deoxy-D-xylulose 5-phosphate. The active-site Proton donor is the histidine 190. 3-amino-2-oxopropyl phosphate is bound by residues glycine 191 and 212-213; that span reads GH.

This sequence belongs to the PNP synthase family. Homooctamer; tetramer of dimers.

The protein localises to the cytoplasm. The enzyme catalyses 3-amino-2-oxopropyl phosphate + 1-deoxy-D-xylulose 5-phosphate = pyridoxine 5'-phosphate + phosphate + 2 H2O + H(+). The protein operates within cofactor biosynthesis; pyridoxine 5'-phosphate biosynthesis; pyridoxine 5'-phosphate from D-erythrose 4-phosphate: step 5/5. Catalyzes the complicated ring closure reaction between the two acyclic compounds 1-deoxy-D-xylulose-5-phosphate (DXP) and 3-amino-2-oxopropyl phosphate (1-amino-acetone-3-phosphate or AAP) to form pyridoxine 5'-phosphate (PNP) and inorganic phosphate. The protein is Pyridoxine 5'-phosphate synthase of Prochlorococcus marinus (strain MIT 9211).